The following is a 546-amino-acid chain: Probable Xaa-Pro aminopeptidase pepP (546 aa).

Mn(2+) contacts are provided by Asp341, Asp352, Glu475, and Glu515.

Belongs to the peptidase M24B family. It depends on Mn(2+) as a cofactor.

The catalysed reaction is Release of any N-terminal amino acid, including proline, that is linked to proline, even from a dipeptide or tripeptide.. Catalyzes the removal of a penultimate prolyl residue from the N-termini of peptides. This is Probable Xaa-Pro aminopeptidase pepP (pepP) from Sclerotinia sclerotiorum (strain ATCC 18683 / 1980 / Ss-1) (White mold).